Reading from the N-terminus, the 1726-residue chain is Protein NLRC5 (1726 aa).

Residues 207 to 537 enclose the NACHT domain; it reads RVVMLSGQAG…THLTIQEFMA (331 aa). 213–220 is an ATP binding site; that stretch reads GQAGSGKT. 18 LRR repeats span residues 879 to 902, 904 to 925, 1002 to 1025, 1026 to 1048, 1103 to 1126, 1128 to 1155, 1212 to 1235, 1351 to 1374, 1387 to 1411, 1421 to 1443, 1447 to 1468, 1502 to 1525, 1532 to 1553, 1560 to 1580, 1588 to 1609, 1616 to 1637, 1642 to 1662, and 1670 to 1691; these read LTVL…EHLP, LDTI…VVLL, NLDF…LPNM, ASLN…LLVQ, CHHL…TFVQ, LPKL…LLSL, LNSV…YLIT, AEFL…SKGE, AQKH…VLGN, SLSL…RGLV, SLEE…CFAQ, LIEL…ELVK, RLRK…MLVK, ALQQ…AVLG, ELTE…SVCE, ALKK…ASCL, SIED…LKLA, and KLKR…ALAT.

The protein belongs to the NLRP family.

It localises to the cytoplasm. Probable regulator of the NF-kappa-B and type I interferon signaling pathways. May also regulate the type II interferon signaling pathway. Plays a role in homeostatic control of innate immunity and in antiviral defense mechanisms. The sequence is that of Protein NLRC5 (nlrc5) from Ictalurus punctatus (Channel catfish).